A 305-amino-acid polypeptide reads, in one-letter code: Serine/threonine-protein kinase 16 (305 aa).

The N-myristoyl glycine moiety is linked to residue G2. S-palmitoyl cysteine attachment occurs at residues C6 and C8. Residues 20-293 enclose the Protein kinase domain; the sequence is YLFIQKLGEG…PLLLSQLEAL (274 aa). Residues 26 to 34 and K49 each bind ATP; that span reads LGEGGFSYV. The active-site Proton acceptor is D148. Residues 166–202 are activation loop; it reads DLGSMNQACIHVEGSRQALTLQDWAAQRCTISYRAPE. A Phosphothreonine; by autocatalysis modification is found at T185. The residue at position 197 (S197) is a Phosphoserine; by autocatalysis. Y198 is modified (phosphotyrosine; by autocatalysis).

The protein belongs to the protein kinase superfamily. Ser/Thr protein kinase family. Monomer. Interacts with DRG1 (via its N-terminal); the interaction phosphorylates DRG1. In terms of processing, mainly autophosphorylated on serine/threonine residues. Also autophosphorylated on Tyr-198. It is uncertain whether palmitoylation is on Cys-6 and/or Cys-8. In terms of tissue distribution, ubiquitously expressed at very low levels.

It is found in the cytoplasm. It localises to the perinuclear region. Its subcellular location is the membrane. The catalysed reaction is L-seryl-[protein] + ATP = O-phospho-L-seryl-[protein] + ADP + H(+). It catalyses the reaction L-threonyl-[protein] + ATP = O-phospho-L-threonyl-[protein] + ADP + H(+). The enzyme catalyses L-tyrosyl-[protein] + ATP = O-phospho-L-tyrosyl-[protein] + ADP + H(+). In terms of biological role, membrane-associated protein kinase that phosphorylates on serine and threonine residues. In vitro substrates include DRG1, ENO1 and EIF4EBP1. Also autophosphorylates. May be involved in secretory vesicle trafficking or intracellular signaling. May have a role in regulating stromal-epithelial interactions that occur during ductal morphogenesis in the mammary gland. May be involved in TGF-beta signaling. Able to autophosphorylate on Tyr residue; it is however unclear whether it has tyrosine-protein kinase toward other proteins. The protein is Serine/threonine-protein kinase 16 (STK16) of Homo sapiens (Human).